A 540-amino-acid chain; its full sequence is Glucose-6-phosphate isomerase (540 aa).

Catalysis depends on Glu-346, which acts as the Proton donor. Catalysis depends on residues His-377 and Lys-505.

The protein belongs to the GPI family.

The protein localises to the cytoplasm. It catalyses the reaction alpha-D-glucose 6-phosphate = beta-D-fructose 6-phosphate. It functions in the pathway carbohydrate biosynthesis; gluconeogenesis. Its pathway is carbohydrate degradation; glycolysis; D-glyceraldehyde 3-phosphate and glycerone phosphate from D-glucose: step 2/4. In terms of biological role, catalyzes the reversible isomerization of glucose-6-phosphate to fructose-6-phosphate. The chain is Glucose-6-phosphate isomerase from Francisella tularensis subsp. tularensis (strain SCHU S4 / Schu 4).